The primary structure comprises 264 residues: Short-chain dehydrogenase/reductase malC (264 aa).

The helical transmembrane segment at 13–35 (GKNVLIIGGTSGIGFAVAQLVIE) threads the bilayer. NADP(+) is bound by residues Thr-22, Ser-23, Ile-25, Ser-45, Asn-46, Lys-49, Asp-75, Asn-88, Arg-130, Val-202, and Thr-204. Asn-249 carries an N-linked (GlcNAc...) asparagine glycan.

Belongs to the short-chain dehydrogenases/reductases (SDR) family.

It localises to the membrane. It carries out the reaction 1-hydroxy-3-{[2-(1,1-dimethylallyl)-indol-3-yl]methyl}-6H,7H,8H-5lambda(5)-pyrrolo[1,2-a]pyrazine + NADPH + H(+) = 1-hydroxy-3-{[2-(1,1-dimethylallyl)-indol-3-yl]methyl}-4H,6H,7H,8H-pyrrolo[1,2-a]pyrazine + NADP(+). The catalysed reaction is 1-hydroxy-3-{[2-(1,1-dimethylallyl)-indol-3-yl]methyl}-4H,6H,7H,8H-pyrrolo[1,2-a]pyrazine = (+)-premalbrancheamide. The protein operates within alkaloid biosynthesis. In terms of biological role, short-chain dehydrogenase/reductase; part of the gene cluster that mediates the biosynthesis of malbrancheamide, a dichlorinated fungal indole alkaloid that belongs to a family of natural products containing a characteristic bicyclo[2.2.2]diazaoctane core. The first step of malbrancheamide biosynthesis involves coupling of L-proline and L-tryptophan by malG, a bimodular NRPS, to produce L-Pro-L-Trp aldehyde through reductive offloading. This compound undergoes spontaneous cyclization and dehydration to give a dienamine which is reverse prenylated at C-2 by malE. The other prenyltransferase present in the cluster, malB, displays modest activity, suggesting that may be a redundant gene in the pathway. Subsequently, a [4+2] Diels-Alder cyclo-addition catalyzed by the bifunctional enzyme malC forms the characteristic bicyclo[2.2.2]diazaoctane ring of premalbrancheamid. The first reaction catalyzed is a NADPH-dependent reduction reaction in which the nicotinamide cofactor is a stoichiometric reagent. Either NADH or NADPH is effective as a cofactor. NADP(+) is required for stereocontrolled formation of premalbrancheamide, however it does not appear to be required as a formal stoichiometric reagent because the second reaction performed by malC, the [4+2] cycloaddition, is a balanced chemical reaction without requirement for hydride transfer to balance the reaction. Finally, the flavin-dependent halogenase malA catalyzes the iterative dichlorination of the indole ring of premalbrancheamide to yield C-9 monochlorinated malbrancheamide B, C-8 monochlorinated isomalbrancheamide B, and dichlorinated malbrancheamide. MalA is also able to brominate premalbrancheamide at C-9 to yield malbrancheamide C, and, to a lesser extend, at C-8 to yield isomalbrancheamide C. Finally, malA can brominate C-9 monochlorinated malbrancheamide B at C-8 to yield malbrancheamide D, or C-8 monochlorinated isomalbrancheamide B at C-9 to produce isomalbrancheamide D. This is Short-chain dehydrogenase/reductase malC from Malbranchea aurantiaca.